The primary structure comprises 329 residues: Malate dehydrogenase (329 aa).

12-18 contacts NAD(+); sequence GAAGQIG. Substrate is bound by residues arginine 93 and arginine 99. Residues asparagine 106, glutamine 113, and 130-132 each bind NAD(+); that span reads TGN. Positions 132 and 163 each coordinate substrate. Histidine 188 serves as the catalytic Proton acceptor.

Belongs to the LDH/MDH superfamily. MDH type 2 family.

It carries out the reaction (S)-malate + NAD(+) = oxaloacetate + NADH + H(+). In terms of biological role, catalyzes the reversible oxidation of malate to oxaloacetate. The protein is Malate dehydrogenase of Mycobacterium bovis (strain ATCC BAA-935 / AF2122/97).